A 387-amino-acid polypeptide reads, in one-letter code: Yellow-related salivary protein ASP2 (387 aa).

The N-terminal stretch at 1 to 18 (MKIFLCLIVVVSLQGVLA) is a signal peptide.

It belongs to the major royal jelly protein family. In terms of tissue distribution, female salivary gland (at protein level).

It localises to the secreted. Functionally, probably modulates blood feeding of sand flies on vertebrate species by binding and sequestering different mediators involved in the host response. Binds biogenic amines. Binds octopamine with high affinity. Binds serotonin and dopamine with medium affinity. Poorly binds histamine. Does not bind noradrenaline and adrenaline. In Phlebotomus orientalis (Phlebotomine sand fly), this protein is Yellow-related salivary protein ASP2.